The chain runs to 157 residues: AP-1 complex subunit sigma-2 (157 aa).

The protein belongs to the adaptor complexes small subunit family. In terms of assembly, adaptor protein complex 1 (AP-1) is a heterotetramer composed of two large adaptins (gamma-type subunit AP1G1 and beta-type subunit AP1B1), a medium adaptin (mu-type subunit AP1M1 or AP1M2) and a small adaptin (sigma-type subunit AP1S1 or AP1S2 or AP1S3). Binds to MUC1. As to expression, widely expressed.

The protein localises to the golgi apparatus. The protein resides in the cytoplasmic vesicle membrane. Its subcellular location is the membrane. It localises to the clathrin-coated pit. Subunit of clathrin-associated adaptor protein complex 1 that plays a role in protein sorting in the late-Golgi/trans-Golgi network (TGN) and/or endosomes. The AP complexes mediate both the recruitment of clathrin to membranes and the recognition of sorting signals within the cytosolic tails of transmembrane cargo molecules. The sequence is that of AP-1 complex subunit sigma-2 (AP1S2) from Homo sapiens (Human).